Consider the following 369-residue polypeptide: CLIP domain-containing serine protease HP8 (369 aa).

Residues 1-24 (MKTPFEKIRIISCILVIVSTNVVG) form the signal peptide. A propeptide spanning residues 25-81 (QKCNGGANCIPLEECTDLFQQLKQGNSPQLTRLLRGLHCGFEDLNSPKICCPPEFLA) is cleaved from the precursor. The Clip domain maps to 26-75 (KCNGGANCIPLEECTDLFQQLKQGNSPQLTRLLRGLHCGFEDLNSPKICC). 8 disulfide bridges follow: cysteine 27–cysteine 74, cysteine 33–cysteine 63, cysteine 39–cysteine 75, cysteine 105–cysteine 239, cysteine 142–cysteine 158, cysteine 186–cysteine 191, cysteine 286–cysteine 303, and cysteine 313–cysteine 344. The 256-residue stretch at 113-368 (IFGGIQTEID…FMDWILSKLE (256 aa)) folds into the Peptidase S1 domain. The active-site Charge relay system is histidine 157. 4 residues coordinate Ca(2+): glutamate 177, asparagine 179, threonine 182, and aspartate 185. Asparagine 179 carries N-linked (GlcNAc...) asparagine glycosylation. Residue aspartate 219 is the Charge relay system of the active site. The active-site Charge relay system is serine 317.

This sequence belongs to the peptidase S1 family. CLIP subfamily. As to quaternary structure, in the active form, heterodimer of a light chain and a heavy chain; disulfide-linked. Proteolytically cleaved for activation. Cleavage produces a light chain and a catalytic heavy chain which remains covalently associated probably through an interchain disulfide bond. As to expression, in larvae, expressed in the fat body and hemocytes.

Its subcellular location is the secreted. It is found in the cytoplasm. Inhibited by (p-amidinophenyl) methanesulfonyl fluoride, p-nitrophenyl-p'-guanidinobenzoate, D-phenylalanyl-L-prolyl-L-arginyl chloromethane, leupeptin, antipain and to a lesser extent by antithrombin III. Endopeptidase with selective post-Arg cleavage site. Functions in the innate immune response to fungal and Gram-positive bacterial infections. Upon pathogen infection promotes nodulation; a cellular defense response in which hemocytes surround and isolate invading pathogens forming aggregates called nodules. Involved in activating nodule formation in response to infection with M.luteus, E.coli or S.cerevisiae. Able to bind the microbes M.luteus, E.coli or S.cerevisiae. According to another report, does not bind microorganisms. The polypeptide is CLIP domain-containing serine protease HP8 (Bombyx mori (Silk moth)).